The primary structure comprises 197 residues: Imidazoleglycerol-phosphate dehydratase (197 aa).

Belongs to the imidazoleglycerol-phosphate dehydratase family.

Its subcellular location is the cytoplasm. The enzyme catalyses D-erythro-1-(imidazol-4-yl)glycerol 3-phosphate = 3-(imidazol-4-yl)-2-oxopropyl phosphate + H2O. It functions in the pathway amino-acid biosynthesis; L-histidine biosynthesis; L-histidine from 5-phospho-alpha-D-ribose 1-diphosphate: step 6/9. The chain is Imidazoleglycerol-phosphate dehydratase from Gloeobacter violaceus (strain ATCC 29082 / PCC 7421).